We begin with the raw amino-acid sequence, 93 residues long: UPF0147 protein PF0239 (93 aa).

It belongs to the UPF0147 family.

In Pyrococcus furiosus (strain ATCC 43587 / DSM 3638 / JCM 8422 / Vc1), this protein is UPF0147 protein PF0239.